Reading from the N-terminus, the 225-residue chain is Glutathione S-transferase Mu 3 (225 aa).

One can recognise a GST N-terminal domain in the interval 5–92 (SSMVLGYWDI…YIARKHNMCG (88 aa)). Glutathione-binding positions include 11 to 12 (YW), 50 to 54 (WLDVK), and 63 to 64 (NL). Lys54 is covalently cross-linked (Glycyl lysine isopeptide (Lys-Gly) (interchain with G-Cter in SUMO2)). Lys73 participates in a covalent cross-link: Glycyl lysine isopeptide (Lys-Gly) (interchain with G-Cter in SUMO2). Residue 76-77 (QS) participates in glutathione binding. The GST C-terminal domain occupies 94–212 (TEEEKIRVDI…QSDQFCKMPI (119 aa)). Tyr120 contacts substrate.

The protein belongs to the GST superfamily. Mu family. As to quaternary structure, homodimer. Post-translationally, the N-terminus is blocked. As to expression, testis and brain.

The protein resides in the cytoplasm. The enzyme catalyses RX + glutathione = an S-substituted glutathione + a halide anion + H(+). Functionally, conjugation of reduced glutathione to a wide number of exogenous and endogenous hydrophobic electrophiles. May govern uptake and detoxification of both endogenous compounds and xenobiotics at the testis and brain blood barriers. This Homo sapiens (Human) protein is Glutathione S-transferase Mu 3 (GSTM3).